The sequence spans 120 residues: LOB domain-containing protein 8 (120 aa).

The region spanning 8-109 is the LOB domain; that stretch reads RPCCVCITKN…AYLHELEEKI (102 aa).

Belongs to the LOB domain-containing protein family.

In Arabidopsis thaliana (Mouse-ear cress), this protein is LOB domain-containing protein 8 (LBD8).